We begin with the raw amino-acid sequence, 1244 residues long: ATP-dependent helicase/nuclease subunit A (1244 aa).

Residues 4–475 form the UvrD-like helicase ATP-binding domain; sequence KKWTAEQLAA…IGLSKNFRSR (472 aa). Residue 25–32 coordinates ATP; that stretch reads AAAGAGKT. The 302-residue stretch at 515 to 816 folds into the UvrD-like helicase C-terminal domain; the sequence is EDVKTATGPV…RIMSIHKSKG (302 aa). Residues 538–559 form a disordered region; that stretch reads EQNTDSAEEKLTDGEEQEDLDS.

Belongs to the helicase family. AddA subfamily. As to quaternary structure, heterodimer of AddA and AddB/RexB. Mg(2+) serves as cofactor.

The catalysed reaction is Couples ATP hydrolysis with the unwinding of duplex DNA by translocating in the 3'-5' direction.. It carries out the reaction ATP + H2O = ADP + phosphate + H(+). In terms of biological role, the heterodimer acts as both an ATP-dependent DNA helicase and an ATP-dependent, dual-direction single-stranded exonuclease. Recognizes the chi site generating a DNA molecule suitable for the initiation of homologous recombination. The AddA nuclease domain is required for chi fragment generation; this subunit has the helicase and 3' -&gt; 5' nuclease activities. This is ATP-dependent helicase/nuclease subunit A from Desulforamulus reducens (strain ATCC BAA-1160 / DSM 100696 / MI-1) (Desulfotomaculum reducens).